A 345-amino-acid chain; its full sequence is S-adenosylmethionine:tRNA ribosyltransferase-isomerase (345 aa).

Belongs to the QueA family. Monomer.

It is found in the cytoplasm. The enzyme catalyses 7-aminomethyl-7-carbaguanosine(34) in tRNA + S-adenosyl-L-methionine = epoxyqueuosine(34) in tRNA + adenine + L-methionine + 2 H(+). It participates in tRNA modification; tRNA-queuosine biosynthesis. Functionally, transfers and isomerizes the ribose moiety from AdoMet to the 7-aminomethyl group of 7-deazaguanine (preQ1-tRNA) to give epoxyqueuosine (oQ-tRNA). In Shewanella sp. (strain MR-7), this protein is S-adenosylmethionine:tRNA ribosyltransferase-isomerase.